Here is a 499-residue protein sequence, read N- to C-terminus: RNA polymerase sigma factor SigA (499 aa).

2 stretches are compositionally biased toward basic residues: residues 1–12 (MSSPKKNFKKPQ) and 77–87 (KKRRGRKPKHA). Disordered stretches follow at residues 1–25 (MSSP…LNEE) and 68–89 (QENK…HAPL). The tract at residues 252–322 (LVTSNLRLVV…TRAIADQART (71 aa)) is sigma-70 factor domain-2. The Interaction with polymerase core subunit RpoC signature appears at 276 to 279 (DLIQ). The tract at residues 331 to 412 (ETINRLAKAE…DTDAQMPDEF (82 aa)) is sigma-70 factor domain-3. Residues 425-480 (LLNNCLSEQEELIVRMRIGMPPYNETKTLDEVSQKIKIPREKIRQIETKAIRKLRQ) are sigma-70 factor domain-4. Positions 453 to 472 (LDEVSQKIKIPREKIRQIET) form a DNA-binding region, H-T-H motif.

The protein belongs to the sigma-70 factor family. RpoD/SigA subfamily. As to quaternary structure, interacts transiently with the RNA polymerase catalytic core.

Its subcellular location is the cytoplasm. Its function is as follows. Sigma factors are initiation factors that promote the attachment of RNA polymerase to specific initiation sites and are then released. This sigma factor is the primary sigma factor during exponential growth. This Mycoplasma pneumoniae (strain ATCC 29342 / M129 / Subtype 1) (Mycoplasmoides pneumoniae) protein is RNA polymerase sigma factor SigA.